Consider the following 174-residue polypeptide: Large ribosomal subunit protein bL17 (174 aa).

Belongs to the bacterial ribosomal protein bL17 family. Part of the 50S ribosomal subunit. Contacts protein L32.

This is Large ribosomal subunit protein bL17 from Ruminiclostridium cellulolyticum (strain ATCC 35319 / DSM 5812 / JCM 6584 / H10) (Clostridium cellulolyticum).